A 478-amino-acid polypeptide reads, in one-letter code: Transposase for insertion sequence element IS231D (478 aa).

Belongs to the transposase 11 family.

Its function is as follows. Involved in the transposition of the insertion sequence. This Bacillus thuringiensis subsp. finitimus protein is Transposase for insertion sequence element IS231D.